Consider the following 137-residue polypeptide: Large ribosomal subunit protein bL21 (137 aa).

Residues 1–26 are disordered; the sequence is MADTKTATPATDAEEATATPPAAAPS.

The protein belongs to the bacterial ribosomal protein bL21 family. In terms of assembly, part of the 50S ribosomal subunit. Contacts protein L20.

Its function is as follows. This protein binds to 23S rRNA in the presence of protein L20. The chain is Large ribosomal subunit protein bL21 from Parasynechococcus marenigrum (strain WH8102).